Consider the following 167-residue polypeptide: Phospholipase A and acyltransferase 1 (167 aa).

The Cytoplasmic segment spans residues 1–138; that stretch reads MAVNDCFSLT…GEGVSEQANR (138 aa). An LRAT domain is found at 20-135; that stretch reads LIEVFRPCYQ…LRYGEGVSEQ (116 aa). Residue histidine 30 is part of the active site. Cysteine 119 (acyl-thioester intermediate) is an active-site residue. Residues 139-159 traverse the membrane as a helical segment; the sequence is AIGTIGLVAAGIDIFTFLGLF. Residues 160–167 are Lumenal-facing; it reads PKRQGAKS.

The protein belongs to the H-rev107 family.

It localises to the membrane. It is found in the cytoplasm. Its subcellular location is the nucleus. The catalysed reaction is a 1,2-diacyl-sn-glycero-3-phosphocholine + H2O = a 1-acyl-sn-glycero-3-phosphocholine + a fatty acid + H(+). It catalyses the reaction a 1,2-diacyl-sn-glycero-3-phosphocholine + H2O = a 2-acyl-sn-glycero-3-phosphocholine + a fatty acid + H(+). It carries out the reaction 1,2-dihexadecanoyl-sn-glycero-3-phosphocholine + H2O = 2-hexadecanoyl-sn-glycero-3-phosphocholine + hexadecanoate + H(+). The enzyme catalyses 1,2-dihexadecanoyl-sn-glycero-3-phosphocholine + H2O = 1-hexadecanoyl-sn-glycero-3-phosphocholine + hexadecanoate + H(+). The catalysed reaction is 1-hexadecanoyl-2-(5Z,8Z,11Z,14Z-eicosatetraenoyl)-sn-glycero-3-phosphoethanolamine + H2O = 2-(5Z,8Z,11Z,14Z)-eicosatetraenoyl-sn-glycero-3-phosphoethanolamine + hexadecanoate + H(+). It catalyses the reaction 1-hexadecanoyl-2-(5Z,8Z,11Z,14Z-eicosatetraenoyl)-sn-glycero-3-phosphoethanolamine + H2O = 1-hexadecanoyl-sn-glycero-3-phosphoethanolamine + (5Z,8Z,11Z,14Z)-eicosatetraenoate + H(+). It carries out the reaction 1,2-di-(9Z-octadecenoyl)-sn-glycero-3-phosphoethanolamine + 1,2-dihexadecanoyl-sn-glycero-3-phosphocholine = hexadecanoyl-sn-glycero-3-phosphocholine + N-hexadecanoyl-1,2-di-(9Z-octadecenoyl)-sn-glycero-3-phosphoethanolamine + H(+). The enzyme catalyses 1,2-dihexadecanoyl-sn-glycero-3-phosphocholine + a 2-acyl-sn-glycero-3-phosphocholine = a 1-hexadecanoyl-2-acyl-sn-glycero-3-phosphocholine + 2-hexadecanoyl-sn-glycero-3-phosphocholine. Its function is as follows. Exhibits both phospholipase A1/2 and acyltransferase activities. Shows phospholipase A1 (PLA1) and A2 (PLA2) activity, catalyzing the calcium-independent release of fatty acids from the sn-1 or sn-2 position of glycerophospholipids. Shows O-acyltransferase activity, catalyzing the transfer of a fatty acyl group from glycerophospholipid to the hydroxyl group of lysophospholipid. The polypeptide is Phospholipase A and acyltransferase 1 (Rattus norvegicus (Rat)).